We begin with the raw amino-acid sequence, 905 residues long: Protein translocase subunit SecA (905 aa).

Residues Q89, 107–111 (GEGKT), and D502 each bind ATP. The disordered stretch occupies residues 837-885 (EQTDVGDPILNDQNKKNSSTLWTPSQENKFVNPKDRNPSDSTTWGKVGR). Over residues 852 to 865 (KNSSTLWTPSQENK) the composition is skewed to polar residues. The Zn(2+) site is built by C889, C891, C900, and H901.

The protein belongs to the SecA family. Monomer and homodimer. Part of the essential Sec protein translocation apparatus which comprises SecA, SecYEG and auxiliary proteins SecDF-YajC and YidC. Zn(2+) is required as a cofactor.

It localises to the cell inner membrane. The protein resides in the cytoplasm. The enzyme catalyses ATP + H2O + cellular proteinSide 1 = ADP + phosphate + cellular proteinSide 2.. Its function is as follows. Part of the Sec protein translocase complex. Interacts with the SecYEG preprotein conducting channel. Has a central role in coupling the hydrolysis of ATP to the transfer of proteins into and across the cell membrane, serving both as a receptor for the preprotein-SecB complex and as an ATP-driven molecular motor driving the stepwise translocation of polypeptide chains across the membrane. This is Protein translocase subunit SecA from Bartonella henselae (strain ATCC 49882 / DSM 28221 / CCUG 30454 / Houston 1) (Rochalimaea henselae).